A 238-amino-acid chain; its full sequence is MLVIPAVDMKNKKCVQLIQGNPDKKHVELDNPPEIAKKWVNEGAEMLHLVDLDGALDGKRVNDEFIEEIIKTSGVPVQIGGGIRSIEDAVYLVEKGAKKVIIGTVAVENPEIIKELSEKIGSEKIMVSLDAKNGKVVIKGWKEKTKYTPVEIGKILEEMGAGSILFTNVDSEGLLNGINIEPTKELVDNLKIPIVASGGVTTIDDLLKFKEIGVYGVVVGSAIYKNLINLKDAIEAVK.

The Proton acceptor role is filled by Asp8. Residue Asp130 is the Proton donor of the active site.

It belongs to the HisA/HisF family.

It is found in the cytoplasm. The enzyme catalyses 1-(5-phospho-beta-D-ribosyl)-5-[(5-phospho-beta-D-ribosylamino)methylideneamino]imidazole-4-carboxamide = 5-[(5-phospho-1-deoxy-D-ribulos-1-ylimino)methylamino]-1-(5-phospho-beta-D-ribosyl)imidazole-4-carboxamide. Its pathway is amino-acid biosynthesis; L-histidine biosynthesis; L-histidine from 5-phospho-alpha-D-ribose 1-diphosphate: step 4/9. The protein is 1-(5-phosphoribosyl)-5-[(5-phosphoribosylamino)methylideneamino] imidazole-4-carboxamide isomerase of Methanococcus maripaludis (strain C6 / ATCC BAA-1332).